Consider the following 69-residue polypeptide: Large ribosomal subunit protein bL31 (69 aa).

Zn(2+) contacts are provided by cysteine 17, cysteine 19, cysteine 37, and cysteine 40.

This sequence belongs to the bacterial ribosomal protein bL31 family. Type A subfamily. Part of the 50S ribosomal subunit. Requires Zn(2+) as cofactor.

Binds the 23S rRNA. This is Large ribosomal subunit protein bL31 from Thermoanaerobacter pseudethanolicus (strain ATCC 33223 / 39E) (Clostridium thermohydrosulfuricum).